Reading from the N-terminus, the 355-residue chain is Zinc finger A20 and AN1 domain-containing stress-associated protein 3 (355 aa).

The A20-type zinc finger occupies Ala199–Gly233. Residues Cys205, Cys209, Cys221, Cys224, Cys295, Cys298, Cys309, Cys311, Cys316, His319, His325, and Cys327 each coordinate Zn(2+). An AN1-type zinc finger spans residues Lys289–Ser335.

Its function is as follows. May be involved in environmental stress response. This Oryza sativa subsp. japonica (Rice) protein is Zinc finger A20 and AN1 domain-containing stress-associated protein 3 (SAP3).